We begin with the raw amino-acid sequence, 1752 residues long: Serine protease/ABC transporter B family protein tagA (1752 aa).

Residues 1-24 (MNKKLFIFGLSLFLFLFIFNLSLS) form the signal peptide. The N-linked (GlcNAc...) asparagine glycan is linked to N20. The Peptidase S8 domain maps to 280–696 (HYSIQSGSAS…FGNIQLSKLI (417 aa)). Catalysis depends on charge relay system residues D312 and H352. N-linked (GlcNAc...) asparagine glycans are attached at residues N400 and N557. S625 serves as the catalytic Charge relay system. Residues N653, N785, and N823 are each glycosylated (N-linked (GlcNAc...) asparagine). A helical transmembrane segment spans residues 909–929 (IVLLGIFGIIIVGAVIFVLVC). The disordered stretch occupies residues 946 to 1032 (DKGGDGNSIR…QNNSPQYDED (87 aa)). A compositionally biased stretch (low complexity) spans 962–994 (NNNNNNNNNNNNNNNNNNNNNNNNNNNNNNNNN). N993 carries an N-linked (GlcNAc...) asparagine glycan. Residues 995–1004 (SNGKQSNIEL) are compositionally biased toward polar residues. Residues 1013–1028 (GTPNGDDQQQQNNSPQ) show a composition bias toward low complexity. The next 6 helical transmembrane spans lie at 1058-1078 (ILGL…AVPL), 1102-1122 (FALI…LLAL), 1174-1194 (IPHM…LFII), 1200-1220 (LVVL…GGYI), 1285-1305 (TSGI…SSLV), and 1315-1335 (LIAF…VASL). In terms of domain architecture, ABC transmembrane type-1 spans 1059 to 1341 (LGLALFLSFI…VASLYTTYKS (283 aa)). The ABC transporter domain maps to 1374–1610 (IQFNKVSFAY…KGMFYDFVQI (237 aa)). An ATP-binding site is contributed by 1409-1416 (GPSGGGKS). A disordered region spans residues 1621–1686 (IQLPSNSRNT…SRSPPPMWRQ (66 aa)). Basic and acidic residues predominate over residues 1631 to 1642 (RNADKLRNRSET). 3 N-linked (GlcNAc...) asparagine glycosylation sites follow: N1638, N1670, and N1694.

It in the C-terminal section; belongs to the ABC transporter superfamily. ABCB family. Multidrug resistance exporter (TC 3.A.1.201) subfamily. The protein in the N-terminal section; belongs to the peptidase S8 family.

The protein localises to the membrane. Functionally, required for a general cell fate determination at the onset of development. Required for the specification of an initial population of prespore cells in which tagA is expressed. Required for normal SDF-2 signaling during spore encapsulation. This is Serine protease/ABC transporter B family protein tagA (tagA) from Dictyostelium discoideum (Social amoeba).